We begin with the raw amino-acid sequence, 153 residues long: uncharacterized protein (153 aa).

3 helical membrane passes run 17 to 37 (ITLIGYWIASILAIIIYSMFF), 44 to 64 (FLLCLLLPTPIIWFNILIGMG), and 118 to 138 (FVFIVGLVLIVGFTIITTLII).

This sequence to M.jannaschii MJ0129 and MJ0554.

The protein localises to the cell membrane. This is an uncharacterized protein from Methanocaldococcus jannaschii (strain ATCC 43067 / DSM 2661 / JAL-1 / JCM 10045 / NBRC 100440) (Methanococcus jannaschii).